The following is a 327-amino-acid chain: MKGKFRFSLKRGLLRPSWNKYNIYNIARKQLPALNNRTLYQKKWNAKKETRSYHGPQLREYQLKNAFRPKLEGVISSLDNKLPIPFMNQTYAFLESRLDMSIHRALFASSALQARQLVLHGKVHVNGKPERRAYRQLLPGDLVTVDQKSVMNCVSASSNNTPSIQDGKQTEQVSSKDGENEKKKDNDDDLFEQTSNGKLPSINETISNFVPKPFMSLMAFIPAYLEVCFRTCSFVYVRDPVARPGLTEVPSPFPEDLHALAYTYYIRSRNMRQGAARCQARRLIPQKVRDASFYQGPPELYKKRNVSPKEAFSHRYPVRQGKLTKLV.

The S4 RNA-binding domain maps to 96 to 154; that stretch reads SRLDMSIHRALFASSALQARQLVLHGKVHVNGKPERRAYRQLLPGDLVTVDQKSVMNCV. A compositionally biased stretch (polar residues) spans 156–173; it reads ASSNNTPSIQDGKQTEQV. The interval 156–199 is disordered; the sequence is ASSNNTPSIQDGKQTEQVSSKDGENEKKKDNDDDLFEQTSNGKL. The span at 174–186 shows a compositional bias: basic and acidic residues; the sequence is SSKDGENEKKKDN.

This sequence belongs to the universal ribosomal protein uS4 family. In terms of assembly, component of the mitochondrial small ribosomal subunit (mt-SSU). Mature yeast 74S mitochondrial ribosomes consist of a small (37S) and a large (54S) subunit. The 37S small subunit contains a 15S ribosomal RNA (15S mt-rRNA) and at least 32 different proteins. The 54S large subunit contains a 21S rRNA (21S mt-rRNA) and at least 45 different proteins. uS3m, uS4m and uS5m form the narrow entry site of the mRNA channel.

The protein resides in the mitochondrion. Component of the mitochondrial ribosome (mitoribosome), a dedicated translation machinery responsible for the synthesis of mitochondrial genome-encoded proteins, including at least some of the essential transmembrane subunits of the mitochondrial respiratory chain. The mitoribosomes are attached to the mitochondrial inner membrane and translation products are cotranslationally integrated into the membrane. In Schizosaccharomyces pombe (strain 972 / ATCC 24843) (Fission yeast), this protein is Small ribosomal subunit protein uS4m (nam9).